The primary structure comprises 98 residues: NADH-ubiquinone oxidoreductase chain 4L (98 aa).

3 helical membrane-spanning segments follow: residues M1 to F21, L26 to L46, and M61 to A81.

It belongs to the complex I subunit 4L family.

It localises to the mitochondrion membrane. The enzyme catalyses a ubiquinone + NADH + 5 H(+)(in) = a ubiquinol + NAD(+) + 4 H(+)(out). In terms of biological role, core subunit of the mitochondrial membrane respiratory chain NADH dehydrogenase (Complex I) which catalyzes electron transfer from NADH through the respiratory chain, using ubiquinone as an electron acceptor. Part of the enzyme membrane arm which is embedded in the lipid bilayer and involved in proton translocation. This is NADH-ubiquinone oxidoreductase chain 4L (MT-ND4L) from Squalus acanthias (Spiny dogfish).